The following is a 777-amino-acid chain: Endonuclease MutS2 (777 aa).

328–335 lines the ATP pocket; the sequence is GPNTGGKT. Residues 702–777 enclose the Smr domain; it reads LDLRGKRYEE…GSGCTIATLG (76 aa).

The protein belongs to the DNA mismatch repair MutS family. MutS2 subfamily. In terms of assembly, homodimer. Binds to stalled ribosomes, contacting rRNA.

In terms of biological role, endonuclease that is involved in the suppression of homologous recombination and thus may have a key role in the control of bacterial genetic diversity. Its function is as follows. Acts as a ribosome collision sensor, splitting the ribosome into its 2 subunits. Detects stalled/collided 70S ribosomes which it binds and splits by an ATP-hydrolysis driven conformational change. Acts upstream of the ribosome quality control system (RQC), a ribosome-associated complex that mediates the extraction of incompletely synthesized nascent chains from stalled ribosomes and their subsequent degradation. Probably generates substrates for RQC. The chain is Endonuclease MutS2 from Streptococcus uberis (strain ATCC BAA-854 / 0140J).